Here is a 332-residue protein sequence, read N- to C-terminus: L-lactate dehydrogenase C chain (332 aa).

Ser-2 is modified (blocked amino end (Ser)). NAD(+) contacts are provided by residues 29-57 (GNVGMACAISILLKGLADELALVDADTNK) and Arg-99. The substrate site is built by Arg-106, Asn-138, and Arg-169. Position 138 (Asn-138) interacts with NAD(+). His-193 acts as the Proton acceptor in catalysis. Thr-248 is a substrate binding site.

The protein belongs to the LDH/MDH superfamily. LDH family. In terms of assembly, homotetramer. Interacts with RABL2/RABL2A; binds preferentially to GTP-bound RABL2. In terms of tissue distribution, expressed within the midpiece of sperm tail (at protein level).

Its subcellular location is the cytoplasm. It carries out the reaction (S)-lactate + NAD(+) = pyruvate + NADH + H(+). It functions in the pathway fermentation; pyruvate fermentation to lactate; (S)-lactate from pyruvate: step 1/1. Functionally, possible role in sperm motility. The sequence is that of L-lactate dehydrogenase C chain (Ldhc) from Mus musculus (Mouse).